The chain runs to 212 residues: Adenylate kinase (212 aa).

10-15 (GAGKGT) is a binding site for ATP. The segment at 30–59 (STGDMFRAAMANQTEMGVLAKSYIDKGELV) is NMP. Residues threonine 31, arginine 36, 57 to 59 (ELV), 86 to 89 (GYPR), and glutamine 93 contribute to the AMP site. Residues 127 to 159 (GRIIHRQTGETFHKVFNPPANYNEEDYYQREDD) are LID. ATP is bound by residues arginine 128 and 137-138 (TF). Positions 156 and 167 each coordinate AMP. Glutamine 195 contacts ATP.

Belongs to the adenylate kinase family. In terms of assembly, monomer.

The protein resides in the cytoplasm. The enzyme catalyses AMP + ATP = 2 ADP. Its pathway is purine metabolism; AMP biosynthesis via salvage pathway; AMP from ADP: step 1/1. In terms of biological role, catalyzes the reversible transfer of the terminal phosphate group between ATP and AMP. Plays an important role in cellular energy homeostasis and in adenine nucleotide metabolism. This Streptococcus gordonii (strain Challis / ATCC 35105 / BCRC 15272 / CH1 / DL1 / V288) protein is Adenylate kinase.